A 198-amino-acid polypeptide reads, in one-letter code: Chorion protein S19 (198 aa).

The N-terminal stretch at 1–16 (MNKFATLAVFISVCLA) is a signal peptide.

The protein belongs to the chorion protein S19 family.

Its subcellular location is the secreted. Its function is as follows. Chorion membrane (egg shell) protein; plays a role in protecting the egg from the environment. This is Chorion protein S19 (Cp19) from Drosophila virilis (Fruit fly).